We begin with the raw amino-acid sequence, 285 residues long: MDKIKVGLQYWIPQHGLTRLVGKLASAEAGGLTTAVIRWFIKQYNVNMDEAKHSDPKHFKTFNEFFVRELKDGARPIAEGDAVITHPADACVSQFGPIEDGQLIQAKGHNFSAQELLGGDAKLAEEFQDGSFATLYLSPRDYHRVHMPCDGTLRQMIYVPGDLFSVNPLTAENVPNLFARNERVVCIFDTEFGPMAQVLVGATIVGSIEQVWAGTITPPRGNSVYKWDYPAEGDKAVILKKGEEMGRFKLGSTVINLFVKNAIAFDESMENGKPTVMGTPYAHQQ.

Residues Asp89, His146, and Ser252 each act as charge relay system; for autoendoproteolytic cleavage activity in the active site. Catalysis depends on Ser252, which acts as the Schiff-base intermediate with substrate; via pyruvic acid; for decarboxylase activity. Ser252 bears the Pyruvic acid (Ser); by autocatalysis mark.

Belongs to the phosphatidylserine decarboxylase family. PSD-B subfamily. Prokaryotic type I sub-subfamily. In terms of assembly, heterodimer of a large membrane-associated beta subunit and a small pyruvoyl-containing alpha subunit. Requires pyruvate as cofactor. Post-translationally, is synthesized initially as an inactive proenzyme. Formation of the active enzyme involves a self-maturation process in which the active site pyruvoyl group is generated from an internal serine residue via an autocatalytic post-translational modification. Two non-identical subunits are generated from the proenzyme in this reaction, and the pyruvate is formed at the N-terminus of the alpha chain, which is derived from the carboxyl end of the proenzyme. The autoendoproteolytic cleavage occurs by a canonical serine protease mechanism, in which the side chain hydroxyl group of the serine supplies its oxygen atom to form the C-terminus of the beta chain, while the remainder of the serine residue undergoes an oxidative deamination to produce ammonia and the pyruvoyl prosthetic group on the alpha chain. During this reaction, the Ser that is part of the protease active site of the proenzyme becomes the pyruvoyl prosthetic group, which constitutes an essential element of the active site of the mature decarboxylase.

The protein localises to the cell membrane. It catalyses the reaction a 1,2-diacyl-sn-glycero-3-phospho-L-serine + H(+) = a 1,2-diacyl-sn-glycero-3-phosphoethanolamine + CO2. It participates in phospholipid metabolism; phosphatidylethanolamine biosynthesis; phosphatidylethanolamine from CDP-diacylglycerol: step 2/2. Catalyzes the formation of phosphatidylethanolamine (PtdEtn) from phosphatidylserine (PtdSer). This is Phosphatidylserine decarboxylase proenzyme from Vibrio campbellii (strain ATCC BAA-1116).